Consider the following 921-residue polypeptide: Sodium/calcium exchanger 2 (921 aa).

An N-terminal signal peptide occupies residues 1–20 (MAPLALVGVALLLGAPHCLG). Topologically, residues 21–68 (EATPTPSLPPPPANDSDASPGGCQGSYRCQPGVLLPVWEPDDPSLGDK) are extracellular. Residues 23–42 (TPTPSLPPPPANDSDASPGG) form a disordered region. Asn-34 carries an N-linked (GlcNAc...) asparagine glycan. A helical membrane pass occupies residues 69–90 (AARAVVYFVAMVYMFLGLSIIA). The Cytoplasmic portion of the chain corresponds to 91-130 (DRFMASIEVITSKEKEITITKANGETSVGTVRIWNETVSN). Residues 131 to 152 (LTLMALGSSAPEILLSVIEVCG) traverse the membrane as a helical segment. Residues 135-175 (ALGSSAPEILLSVIEVCGHNFQAGELGPGTIVGSAAFNMFV) form an Alpha-1 repeat. The Extracellular segment spans residues 153–164 (HNFQAGELGPGT). A helical transmembrane segment spans residues 165-185 (IVGSAAFNMFVVIAVCVYVIP). The Cytoplasmic segment spans residues 186-196 (AGESRKIKHLR). A helical transmembrane segment spans residues 197–219 (VFFVTASWSIFAYVWLYLILAVF). Topologically, residues 220–222 (SPG) are extracellular. Residues 223-246 (VVQVWEALLTLVFFPVCVVFAWMA) form a helical membrane-spanning segment. The Cytoplasmic portion of the chain corresponds to 247 to 720 (DKRLLFYKYV…DGSREERLPS (474 aa)). The segment at 248 to 267 (KRLLFYKYVYKRYRTDPRSG) is putative calmodulin-binding region. Residues 372-391 (AADAARRPGANDGAPDDEDD) are disordered. Calx-beta domains lie at 384–483 (GAPD…VRLL) and 512–612 (ATVT…IELG). Glu-407, Asp-443, Asp-468, Asp-469, Ile-471, Glu-473, Glu-476, Asp-518, Asp-519, Asp-520, Glu-536, Asp-598, Glu-599, and Glu-600 together coordinate Ca(2+). The residue at position 622 (Ser-622) is a Phosphoserine. Glu-665 contacts Ca(2+). Residues 721-740 (CFDYVMHFLTVFWKVLFACL) form a helical membrane-spanning segment. Over 741–747 (PPTEYCH) the chain is Extracellular. Residues 748–770 (GWACFGVCILVIGLLTALIGDLA) traverse the membrane as a helical segment. At 771–772 (SH) the chain is on the cytoplasmic side. A helical transmembrane segment spans residues 773-791 (FGCTVGLKDSVNAVVFVAL). The Alpha-2 repeat unit spans residues 790-826 (ALGTSIPDTFASKVAALQDQCADASIGNVTGSNAVNV). Residues 792–822 (GTSIPDTFASKVAALQDQCADASIGNVTGSN) are Extracellular-facing. Asn-817 is a glycosylation site (N-linked (GlcNAc...) asparagine). A helical membrane pass occupies residues 823–843 (AVNVFLGLGVAWSVAAVYWAV). At 844 to 854 (QGRPFEVRTGT) the chain is on the cytoplasmic side. Residues 855–875 (LAFSVTLFTVFAFVGIAVLLY) traverse the membrane as a helical segment. At 876-892 (RRRPHIGGELGGPRGPK) the chain is on the extracellular side. A helical membrane pass occupies residues 893–909 (LATTALFLGLWFLYILF). The Cytoplasmic segment spans residues 910–921 (ASLEAYCHIRGF).

It belongs to the Ca(2+):cation antiporter (CaCA) (TC 2.A.19) family. SLC8 subfamily. As to expression, detected in neocortex and hippocampus on pyramidal cells, astrocyte processes and dendrites (at protein level). Brain and skeletal muscle.

It is found in the cell membrane. Its subcellular location is the basolateral cell membrane. It localises to the perikaryon. The protein localises to the cell projection. The protein resides in the dendrite. It is found in the dendritic spine. It carries out the reaction Ca(2+)(in) + 3 Na(+)(out) = Ca(2+)(out) + 3 Na(+)(in). Its activity is regulated as follows. Calcium transport is down-regulated by Na(+) and stimulated by Ca(2+). In terms of biological role, mediates the electrogenic exchange of Ca(2+) against Na(+) ions across the cell membrane, and thereby contributes to the regulation of cytoplasmic Ca(2+) levels and Ca(2+)-dependent cellular processes. Contributes to cellular Ca(2+) homeostasis in excitable cells. Contributes to the rapid decrease of cytoplasmic Ca(2+) levels back to baseline after neuronal activation, and thereby contributes to modulate synaptic plasticity, learning and memory. Plays a role in regulating urinary Ca(2+) and Na(+) excretion. The protein is Sodium/calcium exchanger 2 (Slc8a2) of Rattus norvegicus (Rat).